Reading from the N-terminus, the 264-residue chain is Secretory carrier-associated membrane protein 4 (264 aa).

The interval 1 to 33 (MNRHHDPNPFDEDEEIVNPFSKGGGRVPAASRP) is disordered. Topologically, residues 1-122 (MNRHHDPNPF…AQKLQYLAFA (122 aa)) are cytoplasmic. The stretch at 51 to 85 (MNDSSQKQRKLADWEAELRKKEMDIKRREEAIAKF) forms a coiled coil. 4 helical membrane-spanning segments follow: residues 123-143 (SWLGIVLCLVFNVIATMVCWI), 150-170 (IFFLATIYALIGCPLSYVLWY), 185-205 (FGWFFFTYLIHIGFCIVAAIA), and 233-253 (IFYFIGFGLFCLESLLSLWVL). At 254-264 (QKIYLYFRGNK) the chain is on the cytoplasmic side.

This sequence belongs to the SCAMP family.

The protein localises to the cell membrane. It localises to the cytoplasmic vesicle. It is found in the secretory vesicle membrane. In terms of biological role, probably involved in membrane trafficking. The chain is Secretory carrier-associated membrane protein 4 (SCAMP4) from Arabidopsis thaliana (Mouse-ear cress).